We begin with the raw amino-acid sequence, 231 residues long: Large ribosomal subunit protein uL1 (231 aa).

Belongs to the universal ribosomal protein uL1 family. Part of the 50S ribosomal subunit.

Its function is as follows. Binds directly to 23S rRNA. The L1 stalk is quite mobile in the ribosome, and is involved in E site tRNA release. Functionally, protein L1 is also a translational repressor protein, it controls the translation of the L11 operon by binding to its mRNA. The protein is Large ribosomal subunit protein uL1 of Neisseria gonorrhoeae (strain ATCC 700825 / FA 1090).